The following is a 127-amino-acid chain: Small integral membrane protein 33 (127 aa).

Asparagine 15 is a glycosylation site (N-linked (GlcNAc...) asparagine). The helical transmembrane segment at 38–58 (PLLAAIIAAFVLLAICIVLAV) threads the bilayer.

The protein localises to the membrane. The sequence is that of Small integral membrane protein 33 from Mus musculus (Mouse).